We begin with the raw amino-acid sequence, 96 residues long: Co-chaperonin GroES (96 aa).

It belongs to the GroES chaperonin family. As to quaternary structure, heptamer of 7 subunits arranged in a ring. Interacts with the chaperonin GroEL.

It localises to the cytoplasm. Its function is as follows. Together with the chaperonin GroEL, plays an essential role in assisting protein folding. The GroEL-GroES system forms a nano-cage that allows encapsulation of the non-native substrate proteins and provides a physical environment optimized to promote and accelerate protein folding. GroES binds to the apical surface of the GroEL ring, thereby capping the opening of the GroEL channel. The chain is Co-chaperonin GroES from Polynucleobacter necessarius subsp. necessarius (strain STIR1).